Reading from the N-terminus, the 281-residue chain is 2-C-methyl-D-erythritol 4-phosphate cytidylyltransferase (281 aa).

This sequence belongs to the IspD/TarI cytidylyltransferase family. IspD subfamily.

The enzyme catalyses 2-C-methyl-D-erythritol 4-phosphate + CTP + H(+) = 4-CDP-2-C-methyl-D-erythritol + diphosphate. It participates in isoprenoid biosynthesis; isopentenyl diphosphate biosynthesis via DXP pathway; isopentenyl diphosphate from 1-deoxy-D-xylulose 5-phosphate: step 2/6. Its function is as follows. Catalyzes the formation of 4-diphosphocytidyl-2-C-methyl-D-erythritol from CTP and 2-C-methyl-D-erythritol 4-phosphate (MEP). This Psychrobacter arcticus (strain DSM 17307 / VKM B-2377 / 273-4) protein is 2-C-methyl-D-erythritol 4-phosphate cytidylyltransferase.